The sequence spans 685 residues: Heat shock protein homolog SSE1 (685 aa).

Positions 651–685 (QALRSNQEASKMADLSAKLAAQRKAEAEAKENAKE) are disordered. Residues 673–685 (RKAEAEAKENAKE) show a composition bias toward basic and acidic residues.

The protein belongs to the heat shock protein 70 family.

The protein localises to the cytoplasm. This Naumovozyma castellii (Yeast) protein is Heat shock protein homolog SSE1 (SSE1).